A 170-amino-acid chain; its full sequence is Large ribosomal subunit protein uL10 (170 aa).

Belongs to the universal ribosomal protein uL10 family. Part of the ribosomal stalk of the 50S ribosomal subunit. The N-terminus interacts with L11 and the large rRNA to form the base of the stalk. The C-terminus forms an elongated spine to which L12 dimers bind in a sequential fashion forming a multimeric L10(L12)X complex.

Its function is as follows. Forms part of the ribosomal stalk, playing a central role in the interaction of the ribosome with GTP-bound translation factors. The protein is Large ribosomal subunit protein uL10 of Novosphingobium aromaticivorans (strain ATCC 700278 / DSM 12444 / CCUG 56034 / CIP 105152 / NBRC 16084 / F199).